The primary structure comprises 436 residues: 3-ketoacyl-CoA thiolase (436 aa).

Catalysis depends on cysteine 99, which acts as the Acyl-thioester intermediate. Active-site proton acceptor residues include histidine 392 and cysteine 422.

This sequence belongs to the thiolase-like superfamily. Thiolase family. In terms of assembly, heterotetramer of two alpha chains (FadJ) and two beta chains (FadI).

Its subcellular location is the cytoplasm. The catalysed reaction is an acyl-CoA + acetyl-CoA = a 3-oxoacyl-CoA + CoA. It functions in the pathway lipid metabolism; fatty acid beta-oxidation. In terms of biological role, catalyzes the final step of fatty acid oxidation in which acetyl-CoA is released and the CoA ester of a fatty acid two carbons shorter is formed. The protein is 3-ketoacyl-CoA thiolase of Salmonella choleraesuis (strain SC-B67).